A 196-amino-acid chain; its full sequence is Imidazoleglycerol-phosphate dehydratase (196 aa).

The protein belongs to the imidazoleglycerol-phosphate dehydratase family.

Its subcellular location is the cytoplasm. It carries out the reaction D-erythro-1-(imidazol-4-yl)glycerol 3-phosphate = 3-(imidazol-4-yl)-2-oxopropyl phosphate + H2O. Its pathway is amino-acid biosynthesis; L-histidine biosynthesis; L-histidine from 5-phospho-alpha-D-ribose 1-diphosphate: step 6/9. This is Imidazoleglycerol-phosphate dehydratase from Halobacterium salinarum (strain ATCC 700922 / JCM 11081 / NRC-1) (Halobacterium halobium).